Reading from the N-terminus, the 632-residue chain is CREB-regulated transcription coactivator 3 (632 aa).

S66 carries the phosphoserine modification. Over residues 105-115 the composition is skewed to basic residues; the sequence is NRLHSSHHRPV. Positions 105-156 are disordered; that stretch reads NRLHSSHHRPVEKHGRQCDSSPYGSVYLSPPPDNNWRRTNSDSALHTSASSS. S133 carries the post-translational modification Phosphoserine. Position 145 is a phosphoserine; by SIK2 (S145). The segment covering 145-156 has biased composition (low complexity); that stretch reads SDSALHTSASSS. T151 bears the Phosphothreonine mark. Position 293 is a phosphoserine (S293). Residues 310-338 are compositionally biased toward polar residues; sequence GIQNTCSNPSIQATMNNNVNNHTPPGRNN. Residues 310–455 are disordered; the sequence is GIQNTCSNPS…ESQNFQPPSP (146 aa). The span at 339-360 shows a compositional bias: low complexity; the sequence is PTLHPSLRLSSLSNPSLPTSAL. 2 positions are modified to phosphoserine: S372 and S391. Positions 372–405 are enriched in polar residues; it reads SPLTLTPGSESNRSISNQFSPTSPMDMLPNSQGV. Residues 413–424 show a composition bias toward pro residues; sequence SLPPLEPPPPYP. Residues 425 to 440 are compositionally biased toward low complexity; that stretch reads LYTDQPQPQLHHTQQQ. S556 is subject to Phosphoserine.

It belongs to the TORC family. In terms of assembly, binding, as a tetramer, through its N-terminal region, with the bZIP domain of creb1 enhances recruitment of taf4 to the promoter. 'Arg-300' in the bZIP domain of creb1 is essential for this interaction.

It localises to the nucleus. Its subcellular location is the cytoplasm. Transcriptional coactivator for creb1 which activates transcription through both consensus and variant cAMP response element (CRE) sites. Acts as a coactivator, in the SIK/TORC signaling pathway, being active when dephosphorylated and acts independently of creb1 'Ser-119' phosphorylation. Enhances the interaction of creb1 with taf4. Regulates the expression of specific CREB-activated genes such as the steroidogenic gene, StAR. Potent coactivator of ppargc1a and inducer of mitochondrial biogenesis in muscle cells. In Xenopus laevis (African clawed frog), this protein is CREB-regulated transcription coactivator 3 (crtc3).